Here is a 561-residue protein sequence, read N- to C-terminus: Urocanate hydratase (561 aa).

NAD(+) contacts are provided by residues 52 to 53 (GG), Gln-130, 176 to 178 (GMG), Glu-196, Arg-201, 242 to 243 (NA), 263 to 267 (QTSAH), 273 to 274 (YL), and Tyr-322. Residue Cys-410 is part of the active site. Gly-492 provides a ligand contact to NAD(+).

This sequence belongs to the urocanase family. Requires NAD(+) as cofactor.

It localises to the cytoplasm. It carries out the reaction 4-imidazolone-5-propanoate = trans-urocanate + H2O. It participates in amino-acid degradation; L-histidine degradation into L-glutamate; N-formimidoyl-L-glutamate from L-histidine: step 2/3. Its function is as follows. Catalyzes the conversion of urocanate to 4-imidazolone-5-propionate. The chain is Urocanate hydratase from Citrobacter koseri (strain ATCC BAA-895 / CDC 4225-83 / SGSC4696).